Reading from the N-terminus, the 110-residue chain is MHEMSITQSVVEICTQNAGGRRVTAVILEIGDLSGVVPDAIEFCFEACTRDTQLDGARLLIERVQALGRCRDCKAEFALSAYYDPCPACGGFGVDVLSGEELRVKELEVE.

Residue His-2 participates in Ni(2+) binding. Cys-70, Cys-73, Cys-86, and Cys-89 together coordinate Zn(2+).

This sequence belongs to the HypA/HybF family.

In terms of biological role, involved in the maturation of [NiFe] hydrogenases. Required for nickel insertion into the metal center of the hydrogenase. This Geotalea uraniireducens (strain Rf4) (Geobacter uraniireducens) protein is Hydrogenase maturation factor HypA.